The following is a 430-amino-acid chain: Adenylosuccinate synthetase (430 aa).

GTP contacts are provided by residues Gly-12–Lys-18 and Gly-40–Thr-42. Asp-13 acts as the Proton acceptor in catalysis. The Mg(2+) site is built by Asp-13 and Gly-40. Residues Asp-13–Lys-16, Asn-38–His-41, Thr-130, Arg-144, Gln-224, and Thr-239 each bind IMP. His-41 acts as the Proton donor in catalysis. The segment at Pro-277 to Gly-298 is disordered. Residues Glu-285–Glu-296 are compositionally biased toward basic and acidic residues. Thr-299–Arg-305 contacts substrate. Residue Arg-303 participates in IMP binding. GTP contacts are provided by residues Arg-305, Lys-331–Asp-333, and Ser-413–Ser-415.

This sequence belongs to the adenylosuccinate synthetase family. Homodimer. Requires Mg(2+) as cofactor.

The protein localises to the cytoplasm. It carries out the reaction IMP + L-aspartate + GTP = N(6)-(1,2-dicarboxyethyl)-AMP + GDP + phosphate + 2 H(+). It participates in purine metabolism; AMP biosynthesis via de novo pathway; AMP from IMP: step 1/2. Its function is as follows. Plays an important role in the de novo pathway of purine nucleotide biosynthesis. Catalyzes the first committed step in the biosynthesis of AMP from IMP. The chain is Adenylosuccinate synthetase from Bradyrhizobium sp. (strain BTAi1 / ATCC BAA-1182).